Reading from the N-terminus, the 231-residue chain is Isoprenyl transferase (231 aa).

Asp-14 is a catalytic residue. Position 14 (Asp-14) interacts with Mg(2+). Substrate is bound by residues 15–18 (GNGR), Trp-19, Arg-27, His-31, and 59–61 (STE). The active-site Proton acceptor is Asn-62. Substrate contacts are provided by residues Trp-63, Arg-65, Arg-176, and 182–184 (RIS). Mg(2+) is bound at residue Glu-195.

It belongs to the UPP synthase family. As to quaternary structure, homodimer. Mg(2+) serves as cofactor.

Catalyzes the condensation of isopentenyl diphosphate (IPP) with allylic pyrophosphates generating different type of terpenoids. The polypeptide is Isoprenyl transferase (Aquifex aeolicus (strain VF5)).